The chain runs to 312 residues: MRIAFLGTPAFAVAALDALDWAGHALVTVVAQPDRPAGRGQALREPATKAWARARGVPVLQPEKVRDGTLAAALRALAPDALVVAAYGRILGKDLLTLAPHGAINVHGSLLPRWRGAAPIQWAVAEGERETGVTIMQMDEGLDTGDVLLQRALEIREDDTSETLAPRLAALGGEALVEALRLLEAGAIVPVRQDAAQATLARILEKEDGRIAWTSPARRVSDRLRGFTPWPGAFTTLEGRTLKVLEARPGADAEAPAGEPGEAEVVPGRGLAVACGGGTALLVTRVQLEGRPAQSALDLANGLRRKRFRLGT.

109–112 contacts (6S)-5,6,7,8-tetrahydrofolate; the sequence is SLLP.

Belongs to the Fmt family.

The catalysed reaction is L-methionyl-tRNA(fMet) + (6R)-10-formyltetrahydrofolate = N-formyl-L-methionyl-tRNA(fMet) + (6S)-5,6,7,8-tetrahydrofolate + H(+). Its function is as follows. Attaches a formyl group to the free amino group of methionyl-tRNA(fMet). The formyl group appears to play a dual role in the initiator identity of N-formylmethionyl-tRNA by promoting its recognition by IF2 and preventing the misappropriation of this tRNA by the elongation apparatus. The chain is Methionyl-tRNA formyltransferase from Anaeromyxobacter sp. (strain K).